A 558-amino-acid polypeptide reads, in one-letter code: Tyrosine N-monooxygenase (558 aa).

A helical transmembrane segment spans residues 13–33; it reads VLAAPLLSSSAILKLLLFVVT. A disordered region spans residues 48–67; sequence TTKCSSTTCASPPAGVGNPP. Over residues 49–65 the composition is skewed to low complexity; that stretch reads TKCSSTTCASPPAGVGN. Positions 138, 167, 422, 491, and 493 each coordinate heme b.

Belongs to the cytochrome P450 family. Requires heme b as cofactor.

It is found in the endoplasmic reticulum membrane. The enzyme catalyses L-tyrosine + 2 reduced [NADPH--hemoprotein reductase] + 2 O2 = (E)-4-hydroxyphenylacetaldehyde oxime + 2 oxidized [NADPH--hemoprotein reductase] + CO2 + 3 H2O + 2 H(+). The catalysed reaction is L-tyrosine + reduced [NADPH--hemoprotein reductase] + O2 = N-hydroxy-L-tyrosine + oxidized [NADPH--hemoprotein reductase] + H2O + 2 H(+). It catalyses the reaction N-hydroxy-L-tyrosine + reduced [NADPH--hemoprotein reductase] + O2 = N,N-dihydroxy-L-tyrosine + oxidized [NADPH--hemoprotein reductase] + H2O + H(+). It carries out the reaction N,N-dihydroxy-L-tyrosine + H(+) = (E)-4-hydroxyphenylacetaldehyde oxime + CO2 + H2O. It participates in secondary metabolite biosynthesis; dhurrin biosynthesis; dhurrin from L-tyrosine: step 1/3. Its function is as follows. Cytochrome P450 involved in the biosynthesis of the cyanogenic glucoside dhurrin. Catalyzes the conversion of L-tyrosine to p-hydroxyphenylacetaldehyde oxime, via the N-hydroxy-L-tyrosine and N,N-dihydroxy-L-tyrosine intermediates. Produces the (E) isomer of the final oxime product. The chain is Tyrosine N-monooxygenase (CYP79A1) from Sorghum bicolor (Sorghum).